A 387-amino-acid chain; its full sequence is Erythronate-4-phosphate dehydrogenase (387 aa).

Substrate is bound by residues serine 45 and threonine 67. Aspartate 147 lines the NAD(+) pocket. The active site involves arginine 208. Aspartate 232 serves as a coordination point for NAD(+). Glutamate 237 is a catalytic residue. The Proton donor role is filled by histidine 254. Glycine 257 contacts NAD(+). Tyrosine 258 is a substrate binding site.

The protein belongs to the D-isomer specific 2-hydroxyacid dehydrogenase family. PdxB subfamily. Homodimer.

It is found in the cytoplasm. It carries out the reaction 4-phospho-D-erythronate + NAD(+) = (R)-3-hydroxy-2-oxo-4-phosphooxybutanoate + NADH + H(+). Its pathway is cofactor biosynthesis; pyridoxine 5'-phosphate biosynthesis; pyridoxine 5'-phosphate from D-erythrose 4-phosphate: step 2/5. In terms of biological role, catalyzes the oxidation of erythronate-4-phosphate to 3-hydroxy-2-oxo-4-phosphonooxybutanoate. The sequence is that of Erythronate-4-phosphate dehydrogenase from Shewanella sediminis (strain HAW-EB3).